Here is an 84-residue protein sequence, read N- to C-terminus: Protein Tlp homolog (84 aa).

Residues 1 to 20 are disordered; that stretch reads MGKEERYTKKPKPDDRSDNV.

This sequence belongs to the Tlp family.

This Caldanaerobacter subterraneus subsp. tengcongensis (strain DSM 15242 / JCM 11007 / NBRC 100824 / MB4) (Thermoanaerobacter tengcongensis) protein is Protein Tlp homolog.